A 152-amino-acid polypeptide reads, in one-letter code: Large ribosomal subunit protein bL9 (152 aa).

It belongs to the bacterial ribosomal protein bL9 family.

Binds to the 23S rRNA. The chain is Large ribosomal subunit protein bL9 from Synechococcus elongatus (strain ATCC 33912 / PCC 7942 / FACHB-805) (Anacystis nidulans R2).